The sequence spans 347 residues: MSYKIVALPGDGIGPEILSGTLELLKLISEKYHFEYHLESHHFGGVSIDYYGTPLTNETLQSCKNADAILLGAIGGPKWTDPNNRPEHGLLKLRKSLNLFANIRPTFVTKGASHLSPLKQDIVEGTDLVIVRELTSGIYFGEPSYVKKTEALDSLKYSSQEIERIVRIAFNLANRRRKKLTSVDKENVLSSSKLWRQIVNDVKKDYPEVEVNHMLVDACSMHLITQPTQFDVIVTENLFGDILSDEASVIPGSLGLSPSASFGQTGTRLYEPIHGSAPDIANEDKANPFGMVLSLALCLRESLNQNDAANELESIVYSFIQSNKTTADLGGQYRTSEIFKLLKEKYL.

Residue Gly-76–Glu-87 coordinates NAD(+). The substrate site is built by Arg-94, Arg-104, Arg-132, and Asp-217. Mg(2+) contacts are provided by Asp-217, Asp-241, and Asp-245. Gly-275 to Asn-287 provides a ligand contact to NAD(+).

Belongs to the isocitrate and isopropylmalate dehydrogenases family. LeuB type 1 subfamily. Homodimer. Mg(2+) is required as a cofactor. Requires Mn(2+) as cofactor.

It localises to the cytoplasm. It carries out the reaction (2R,3S)-3-isopropylmalate + NAD(+) = 4-methyl-2-oxopentanoate + CO2 + NADH. Its pathway is amino-acid biosynthesis; L-leucine biosynthesis; L-leucine from 3-methyl-2-oxobutanoate: step 3/4. Its function is as follows. Catalyzes the oxidation of 3-carboxy-2-hydroxy-4-methylpentanoate (3-isopropylmalate) to 3-carboxy-4-methyl-2-oxopentanoate. The product decarboxylates to 4-methyl-2 oxopentanoate. This Staphylococcus epidermidis (strain ATCC 35984 / DSM 28319 / BCRC 17069 / CCUG 31568 / BM 3577 / RP62A) protein is 3-isopropylmalate dehydrogenase.